Here is a 204-residue protein sequence, read N- to C-terminus: GTP cyclohydrolase-2 (204 aa).

49–53 (RIHSE) is a binding site for GTP. Zn(2+) is bound by residues Cys-54, Cys-65, and Cys-67. Residues Gln-70, 92–94 (EGR), and Thr-114 contribute to the GTP site. Asp-126 serves as the catalytic Proton acceptor. Arg-128 (nucleophile) is an active-site residue. Thr-149 and Lys-154 together coordinate GTP.

Belongs to the GTP cyclohydrolase II family. Requires Zn(2+) as cofactor.

The catalysed reaction is GTP + 4 H2O = 2,5-diamino-6-hydroxy-4-(5-phosphoribosylamino)-pyrimidine + formate + 2 phosphate + 3 H(+). Its pathway is cofactor biosynthesis; riboflavin biosynthesis; 5-amino-6-(D-ribitylamino)uracil from GTP: step 1/4. Catalyzes the conversion of GTP to 2,5-diamino-6-ribosylamino-4(3H)-pyrimidinone 5'-phosphate (DARP), formate and pyrophosphate. In Shewanella baltica (strain OS223), this protein is GTP cyclohydrolase-2.